Here is a 115-residue protein sequence, read N- to C-terminus: NADH-ubiquinone oxidoreductase chain 3 (115 aa).

A run of 3 helical transmembrane segments spans residues 4-24 (MLAMLINITLSLCLISLAFWL), 55-75 (FFLVGITFLLLDLEIALLLPL), and 84-104 (MITTTIVSLSLVSILALGLSY).

The protein belongs to the complex I subunit 3 family. As to quaternary structure, core subunit of respiratory chain NADH dehydrogenase (Complex I) which is composed of 45 different subunits. Interacts with TMEM186. Interacts with TMEM242.

The protein resides in the mitochondrion inner membrane. The enzyme catalyses a ubiquinone + NADH + 5 H(+)(in) = a ubiquinol + NAD(+) + 4 H(+)(out). Its function is as follows. Core subunit of the mitochondrial membrane respiratory chain NADH dehydrogenase (Complex I) which catalyzes electron transfer from NADH through the respiratory chain, using ubiquinone as an electron acceptor. Essential for the catalytic activity of complex I. The polypeptide is NADH-ubiquinone oxidoreductase chain 3 (Reithrodon auritus (Bunny rat)).